The primary structure comprises 288 residues: ATP phosphoribosyltransferase (288 aa).

This sequence belongs to the ATP phosphoribosyltransferase family. Long subfamily. The cofactor is Mg(2+).

It localises to the cytoplasm. The catalysed reaction is 1-(5-phospho-beta-D-ribosyl)-ATP + diphosphate = 5-phospho-alpha-D-ribose 1-diphosphate + ATP. Its pathway is amino-acid biosynthesis; L-histidine biosynthesis; L-histidine from 5-phospho-alpha-D-ribose 1-diphosphate: step 1/9. Its activity is regulated as follows. Feedback inhibited by histidine. Catalyzes the condensation of ATP and 5-phosphoribose 1-diphosphate to form N'-(5'-phosphoribosyl)-ATP (PR-ATP). Has a crucial role in the pathway because the rate of histidine biosynthesis seems to be controlled primarily by regulation of HisG enzymatic activity. In Methanococcus maripaludis (strain C7 / ATCC BAA-1331), this protein is ATP phosphoribosyltransferase.